Reading from the N-terminus, the 106-residue chain is Protein S40-3 (106 aa).

The disordered stretch occupies residues 1–65 (MSEEFQESEV…TEEEGEMTPP (65 aa)). Basic and acidic residues predominate over residues 16–41 (SFTRKDNKISHNNENYERKSTEKDKI).

This sequence belongs to the senescence regulator S40 family.

It localises to the nucleus. Regulates senescence either by modulating WRKY53 or by activating SAG12. Affects the natural variation of cyst nematodes sex ratio and susceptibility to parasitic nematodes, depending on single nucleotide polymorphism (SNPs) between cultivars. The sequence is that of Protein S40-3 from Arabidopsis thaliana (Mouse-ear cress).